A 342-amino-acid chain; its full sequence is Ferredoxin--NADP reductase (342 aa).

The FAD site is built by Cys17, Asp36, Gln44, Tyr49, Val89, Phe124, Asp289, and Thr330.

This sequence belongs to the ferredoxin--NADP reductase type 2 family. Homodimer. FAD serves as cofactor.

It carries out the reaction 2 reduced [2Fe-2S]-[ferredoxin] + NADP(+) + H(+) = 2 oxidized [2Fe-2S]-[ferredoxin] + NADPH. This Bradyrhizobium sp. (strain ORS 278) protein is Ferredoxin--NADP reductase.